Consider the following 279-residue polypeptide: MKVRFTKMQGLGNDFVVIDAVRQPVEPSPEQIRHIADRRYGVGCDQVLLATPARRSQADFGYLIFNPDGSQAEHCGNGVRCLARFLDDRGLVPAGRHELVIETINGLSRVRLCDDGPVTVDMGAPVLEPPHIPFRAPSRAREYELEVEGQVVRLGAVSMGNPHAVLRVDDVDSAPVETLGPAIESHSRFPRRVNVGFMQVLTPTHIRLRVYERGAGETLACGTGACAAVVSGRLRGWLEEAVDVDLPGGRLVIHWAGDGEHVWMTGPAETVFEGEIRLD.

The substrate site is built by N13, Q46, and N66. The active-site Proton donor is the C75. Substrate-binding positions include 76–77 (GN), N161, N194, and 212–213 (ER). Catalysis depends on C221, which acts as the Proton acceptor. Residue 222-223 (GT) participates in substrate binding.

This sequence belongs to the diaminopimelate epimerase family. As to quaternary structure, homodimer.

It localises to the cytoplasm. It carries out the reaction (2S,6S)-2,6-diaminopimelate = meso-2,6-diaminopimelate. It functions in the pathway amino-acid biosynthesis; L-lysine biosynthesis via DAP pathway; DL-2,6-diaminopimelate from LL-2,6-diaminopimelate: step 1/1. Catalyzes the stereoinversion of LL-2,6-diaminopimelate (L,L-DAP) to meso-diaminopimelate (meso-DAP), a precursor of L-lysine and an essential component of the bacterial peptidoglycan. The protein is Diaminopimelate epimerase of Alkalilimnicola ehrlichii (strain ATCC BAA-1101 / DSM 17681 / MLHE-1).